The sequence spans 124 residues: Small ribosomal subunit protein uS12 (124 aa).

The span at 11-20 (GRKRLKKKSK) shows a compositional bias: basic residues. Positions 11 to 30 (GRKRLKKKSKSPALENNPQK) are disordered. Asp89 bears the 3-methylthioaspartic acid mark. Residues 105–124 (EGVANRRQSRSRYGAKKPKK) form a disordered region. Positions 111-124 (RQSRSRYGAKKPKK) are enriched in basic residues.

Belongs to the universal ribosomal protein uS12 family. Part of the 30S ribosomal subunit. Contacts proteins S8 and S17. May interact with IF1 in the 30S initiation complex.

Functionally, with S4 and S5 plays an important role in translational accuracy. Its function is as follows. Interacts with and stabilizes bases of the 16S rRNA that are involved in tRNA selection in the A site and with the mRNA backbone. Located at the interface of the 30S and 50S subunits, it traverses the body of the 30S subunit contacting proteins on the other side and probably holding the rRNA structure together. The combined cluster of proteins S8, S12 and S17 appears to hold together the shoulder and platform of the 30S subunit. This Kosmotoga olearia (strain ATCC BAA-1733 / DSM 21960 / TBF 19.5.1) protein is Small ribosomal subunit protein uS12.